A 535-amino-acid polypeptide reads, in one-letter code: PAC-1 interacting and coiled-coil domain-containing protein 1 (535 aa).

A disordered region spans residues 1–67 (MIITTPRRAN…KQTPPRSPVI (67 aa)). Over residues 36-57 (SSTTPSSIGSSSSSSSSYASST) the composition is skewed to low complexity. 2 coiled-coil regions span residues 109 to 172 (KLQY…RDLS) and 198 to 242 (SLMK…RQSL). Disordered regions lie at residues 254–277 (NESE…NDEE) and 503–535 (TCRP…HTHN). A compositionally biased stretch (polar residues) spans 503-525 (TCRPTTTLISSTQPAQRSVSVEK). Over residues 526 to 535 (NNNNNVHTHN) the composition is skewed to low complexity.

It belongs to the CCDC85 family. In terms of assembly, interacts with pac-1 and jac-1.

It localises to the cell junction. It is found in the adherens junction. Linker protein which helps to recruit the Rho GTPase-activating protein, pac-1, to adherens junctions. This Caenorhabditis elegans protein is PAC-1 interacting and coiled-coil domain-containing protein 1.